Reading from the N-terminus, the 456-residue chain is MTOR-associated protein MEAK7 (456 aa).

The N-myristoyl glycine moiety is linked to residue Gly2. The TLDc domain occupies Ser244–Gly412.

As to quaternary structure, interacts (via C-terminal domain) with MTOR and MLST8; the interaction with MTOR increases upon nutrient stimulation.

The protein localises to the membrane. The protein resides in the cytoplasm. Its subcellular location is the lysosome. Its function is as follows. Activates an alternative mTOR signaling through RPS6KB2 activation and EIF4EBP1 repression to regulate cell proliferation and migration. Recruits MTOR at the lysosome, essential for MTOR signaling at the lysosome. The protein is MTOR-associated protein MEAK7 of Homo sapiens (Human).